Here is a 102-residue protein sequence, read N- to C-terminus: MNGQNIRIRLKAFDHRILDASTKEIVSTAKRTGATIRGPIPLPTHIAKFTVNRSPHIDKKSREQFEMRTHKRVLDIVDPTPQTVDALMKLDLAAGVDVEIKL.

It belongs to the universal ribosomal protein uS10 family. Part of the 30S ribosomal subunit.

In terms of biological role, involved in the binding of tRNA to the ribosomes. The chain is Small ribosomal subunit protein uS10 from Methylobacterium radiotolerans (strain ATCC 27329 / DSM 1819 / JCM 2831 / NBRC 15690 / NCIMB 10815 / 0-1).